A 161-amino-acid polypeptide reads, in one-letter code: MKLSDIADNAGARKKRMRVGRGIGSGKGKTSGRGGKGQTARSGVRIKGFEGGQMPMHRRLPKRGFNNIFALDFVEINLDRIQQAIDAKKLDAGSVINAEALVKSGALRRAKDGVRLLGRGEITAKVNIEVHGASKSAIAAVEKAGGTVKLLAPAKDEGEAA.

A disordered region spans residues 1–43; sequence MKLSDIADNAGARKKRMRVGRGIGSGKGKTSGRGGKGQTARSG. The span at 21-37 shows a compositional bias: gly residues; the sequence is RGIGSGKGKTSGRGGKG.

It belongs to the universal ribosomal protein uL15 family. In terms of assembly, part of the 50S ribosomal subunit.

Its function is as follows. Binds to the 23S rRNA. In Bradyrhizobium sp. (strain BTAi1 / ATCC BAA-1182), this protein is Large ribosomal subunit protein uL15.